The primary structure comprises 378 residues: Mevalonate kinase (378 aa).

Residues K10, S138, and 143-149 (GSGLGSS) contribute to the ATP site. Residues S149 and E193 each contribute to the Mg(2+) site. D204 serves as the catalytic Proton acceptor.

Belongs to the GHMP kinase family. Mevalonate kinase subfamily. Requires Mg(2+) as cofactor.

Its subcellular location is the cytoplasm. The catalysed reaction is (R)-mevalonate + ATP = (R)-5-phosphomevalonate + ADP + H(+). It functions in the pathway isoprenoid biosynthesis; isopentenyl diphosphate biosynthesis via mevalonate pathway; isopentenyl diphosphate from (R)-mevalonate: step 1/3. With respect to regulation, its activity is inhibited in vitro by geranyl pyrophosphate (GPP) and farnesyl pyrophosphate (FPP) that bind competitively at the ATP-binding site on the enzyme. Functionally, catalyzes the phosphorylation of mevalonate to mevalonate 5-phosphate, a key step in isoprenoid and cholesterol biosynthesis. The polypeptide is Mevalonate kinase (Arabidopsis thaliana (Mouse-ear cress)).